A 127-amino-acid chain; its full sequence is Protein SPIRAL1-like 4 (127 aa).

The disordered stretch occupies residues 1 to 127; it reads MGKARGVNSG…FGSGPCGSDK (127 aa). Residues 39–48 are compositionally biased toward low complexity; it reads TTTTTTTTTT. Serine 80 is subject to Phosphoserine. A compositionally biased stretch (polar residues) spans 80–94; sequence SPNNYYRSDGQNCGN.

Belongs to the SPIRAL1 family. In terms of tissue distribution, ubiquitous.

Acts redundantly with SPR1 in maintaining the cortical microtubules organization essential for anisotropic cell growth. The polypeptide is Protein SPIRAL1-like 4 (SP1L4) (Arabidopsis thaliana (Mouse-ear cress)).